The primary structure comprises 260 residues: Kallikrein-8 (260 aa).

The signal sequence occupies residues 1–28 (MGRPRPRAAKTWMFLLLLGGAWAGHSRA). The propeptide occupies 29–32 (QEDK). One can recognise a Peptidase S1 domain in the interval 33–257 (VLGGHECQPH…YLDWIKKIIG (225 aa)). Disulfide bonds link Cys-39–Cys-173, Cys-58–Cys-74, Cys-145–Cys-246, Cys-152–Cys-218, Cys-184–Cys-198, and Cys-208–Cys-233. Catalysis depends on His-73, which acts as the Charge relay system. Residue Asn-110 is glycosylated (N-linked (GlcNAc...) asparagine). Residue Asp-120 is the Charge relay system of the active site. Ser-212 acts as the Charge relay system in catalysis.

It belongs to the peptidase S1 family. Kallikrein subfamily. Interacts with SPINK9. In terms of tissue distribution, isoform 1 is predominantly expressed in the pancreas. Isoform 2 is expressed in adult brain and hippocampus. Isoform 1 and isoform 2 are found in fetal brain and placenta. Detected in salivary gland, uterus, thymus, breast, testis and kidney but not in spleen, liver, lung or normal ovarian tissue. Displays an 11.5-fold increase in Alzheimer disease hippocampus compared to controls and is overexpressed in some ovarian carcinomas. Expressed at low levels in normal skin while high levels are found in psoriasis vulgaris, seborrheic keratosis, lichen planus and squamous cell carcinoma skin samples. Expressed in the keratinocytes.

Its subcellular location is the secreted. The protein resides in the cytoplasm. It carries out the reaction Cleavage of amide substrates following the basic amino acids Arg or Lys at the P1 position, with a preference for Arg over Lys.. With respect to regulation, inhibited by a range of serine protease inhibitors including antipain, aprotinin, leupeptin, benzamidine and soybean trypsin inhibitor. Its function is as follows. Serine protease which is capable of degrading a number of proteins such as casein, fibrinogen, kininogen, fibronectin and collagen type IV. Also cleaves L1CAM in response to increased neural activity. Induces neurite outgrowth and fasciculation of cultured hippocampal neurons. Plays a role in the formation and maturation of orphan and small synaptic boutons in the Schaffer-collateral pathway, regulates Schaffer-collateral long-term potentiation in the hippocampus and is required for memory acquisition and synaptic plasticity. Involved in skin desquamation and keratinocyte proliferation. Plays a role in the secondary phase of pathogenesis following spinal cord injury. In Homo sapiens (Human), this protein is Kallikrein-8 (KLK8).